The following is a 323-amino-acid chain: Protoheme IX farnesyltransferase (323 aa).

9 helical membrane passes run 28-48 (IIPL…NGQV), 50-70 (PVLL…AQTL), 99-119 (HALI…VVFV), 122-142 (ASAL…THML), 150-170 (IVIG…AVTG), 178-198 (ALFA…ALMI), 223-243 (IWIY…PLAA), 244-264 (SGIV…YKTW), and 279-299 (LFKY…VDSL).

Belongs to the UbiA prenyltransferase family. Protoheme IX farnesyltransferase subfamily.

It localises to the cell inner membrane. The enzyme catalyses heme b + (2E,6E)-farnesyl diphosphate + H2O = Fe(II)-heme o + diphosphate. The protein operates within porphyrin-containing compound metabolism; heme O biosynthesis; heme O from protoheme: step 1/1. Its function is as follows. Converts heme B (protoheme IX) to heme O by substitution of the vinyl group on carbon 2 of heme B porphyrin ring with a hydroxyethyl farnesyl side group. This chain is Protoheme IX farnesyltransferase, found in Gloeothece citriformis (strain PCC 7424) (Cyanothece sp. (strain PCC 7424)).